Consider the following 271-residue polypeptide: Hematopoietically-expressed homeobox protein Hhex (271 aa).

The interaction with SOX13 stretch occupies residues 1-138 (MQFPHPGPAA…PFLQRPLHKR (138 aa)). Residue Ser-54 is modified to Phosphoserine. Residues 138-197 (RKGGQVRFSNDQTVELEKKFETQKYLSPPERKRLAKMLQLSERQVKTWFQNRRAKWRRLK) constitute a DNA-binding region (homeobox). The tract at residues 138–271 (RKGGQVRFSN…EGDKGYFNAG (134 aa)) is required for WNT signaling induction. The disordered stretch occupies residues 195–271 (RLKQENPQSN…EGDKGYFNAG (77 aa)). The span at 212 to 242 (LDTSCEQGQDLPSEQNKGASLDRSQCSPSPA) shows a compositional bias: polar residues. Acidic residues predominate over residues 245-261 (EDPDSEISEDSDQEVDI).

In terms of assembly, interacts with CD81; the interaction prevents nuclear translocation of HHEX. Interacts (via N-terminus) with SOX13; abolishes the SOX13-mediated inhibition of WNT-mediated transcriptional activity via competitive inhibition of the SOX13-TCF7 complex. Interacts with EIF4E; the interaction inhibits EIF4E-mediated mRNA nuclear export.

The protein localises to the nucleus. Its subcellular location is the nuclear body. The protein resides in the cytoplasm. Its function is as follows. Recognizes the DNA sequence 5'-ATTAA-3'. Transcriptional repressor. Activator of WNT-mediated transcription in conjunction with CTNNB1. Establishes anterior identity at two levels; acts early to enhance canonical WNT-signaling by repressing expression of TLE4, and acts later to inhibit NODAL-signaling by directly targeting NODAL. Inhibits EIF4E-mediated mRNA nuclear export. May play a role in hematopoietic differentiation. The polypeptide is Hematopoietically-expressed homeobox protein Hhex (Hhex) (Mus musculus (Mouse)).